The primary structure comprises 179 residues: uncharacterized protein (179 aa).

The signal sequence occupies residues 1–27 (MNKSMIQSGGYVLLAGLILAMSSTLFA). Cys-43 and Cys-83 are disulfide-bonded.

It belongs to the fimbrial protein family.

The protein resides in the fimbrium. Functionally, part of the yfcOPQRSUV fimbrial operon. Could contribute to adhesion to various surfaces in specific environmental niches. Increases adhesion to eukaryotic T24 bladder epithelial cells in the absence of fim genes. This is an uncharacterized protein from Escherichia coli (strain K12).